Here is a 113-residue protein sequence, read N- to C-terminus: rRNA-processing protein cgrA (113 aa).

A compositionally biased stretch (polar residues) spans 1–15; sequence MSTITTSSVASSNGM. Residues 1–113 form a disordered region; it reads MSTITTSSVA…REKRNKLLHS (113 aa). Residues 37-100 are a coiled coil; that stretch reads SYEKRLEARK…EKMHRKRVER (64 aa). Over residues 38 to 92 the composition is skewed to basic and acidic residues; it reads YEKRLEARKLQEAVKEHEREMREEREAERKAQIQKIKDRRAAKEEKERYEKMAEK. A compositionally biased stretch (basic residues) spans 93–113; that stretch reads MHRKRVERLKRREKRNKLLHS.

Belongs to the CGR1 family.

Its subcellular location is the nucleus. The protein localises to the nucleolus. Its function is as follows. Involved in nucleolar integrity and required for processing of the pre-rRNA for the 60S ribosome subunit. This is rRNA-processing protein cgrA (cgrA) from Aspergillus clavatus (strain ATCC 1007 / CBS 513.65 / DSM 816 / NCTC 3887 / NRRL 1 / QM 1276 / 107).